A 444-amino-acid polypeptide reads, in one-letter code: tRNA (guanine-N(7)-)-methyltransferase non-catalytic subunit TRM82 (444 aa).

7 WD repeats span residues 1-47, 48-99, 100-147, 148-192, 193-237, 238-279, and 308-354; these read MSVI…WSDD, FDKI…LGAP, PIYS…KRFC, FSKR…EPIL, GHVS…DKWL, FGHK…STFD, and FAVS…ITFP. Positions 55 to 92 are disordered; it reads RNTTAKEQQGQSSENENENKKLKSNKGDSIKRTAAKVP. Residues 71–85 are compositionally biased toward basic and acidic residues; that stretch reads NENKKLKSNKGDSIK. The residue at position 93 (serine 93) is a Phosphoserine.

This sequence belongs to the WD repeat TRM82 family. In terms of assembly, forms a heterodimer with the catalytic subunit TRM8.

The protein resides in the nucleus. The protein operates within tRNA modification; N(7)-methylguanine-tRNA biosynthesis. Its function is as follows. Required for the formation of N(7)-methylguanine at position 46 (m7G46) in tRNA, a modification required to maintain stability of tRNAs; its absence resulting in tRNA decay. In the complex, it is required to stabilize and induce conformational changes of the catalytic subunit. This is tRNA (guanine-N(7)-)-methyltransferase non-catalytic subunit TRM82 from Saccharomyces cerevisiae (strain ATCC 204508 / S288c) (Baker's yeast).